The chain runs to 701 residues: Polyribonucleotide nucleotidyltransferase (701 aa).

Residues aspartate 487 and aspartate 493 each contribute to the Mg(2+) site. The KH domain maps to 553–612 (PRLYTLRINPDKIRDVIGKGGSVIRALTEETGTSIDIAEDGLITIASVSAEGAEEAKRRI). An S1 motif domain is found at 622–692 (GKIYEGTVVK…ERGRIRLSIK (71 aa)).

Belongs to the polyribonucleotide nucleotidyltransferase family. The cofactor is Mg(2+).

It localises to the cytoplasm. It carries out the reaction RNA(n+1) + phosphate = RNA(n) + a ribonucleoside 5'-diphosphate. Its function is as follows. Involved in mRNA degradation. Catalyzes the phosphorolysis of single-stranded polyribonucleotides processively in the 3'- to 5'-direction. The polypeptide is Polyribonucleotide nucleotidyltransferase (Laribacter hongkongensis (strain HLHK9)).